The sequence spans 507 residues: ATP synthase subunit alpha, mitochondrial (507 aa).

An ATP-binding site is contributed by 171–178 (GDRQTGKT).

This sequence belongs to the ATPase alpha/beta chains family. F-type ATPases have 2 components, CF(1) - the catalytic core - and CF(0) - the membrane proton channel. CF(1) has five subunits: alpha(3), beta(3), gamma(1), delta(1), epsilon(1). CF(0) has three main subunits: a, b and c.

Its subcellular location is the mitochondrion. It is found in the mitochondrion inner membrane. Functionally, mitochondrial membrane ATP synthase (F(1)F(0) ATP synthase or Complex V) produces ATP from ADP in the presence of a proton gradient across the membrane which is generated by electron transport complexes of the respiratory chain. F-type ATPases consist of two structural domains, F(1) - containing the extramembraneous catalytic core, and F(0) - containing the membrane proton channel, linked together by a central stalk and a peripheral stalk. During catalysis, ATP synthesis in the catalytic domain of F(1) is coupled via a rotary mechanism of the central stalk subunits to proton translocation. Subunits alpha and beta form the catalytic core in F(1). Rotation of the central stalk against the surrounding alpha(3)beta(3) subunits leads to hydrolysis of ATP in three separate catalytic sites on the beta subunits. Subunit alpha does not bear the catalytic high-affinity ATP-binding sites. The polypeptide is ATP synthase subunit alpha, mitochondrial (ATPA) (Pisum sativum (Garden pea)).